Consider the following 368-residue polypeptide: Germination protease (368 aa).

Positions 1-16 (MKKSELDVNQYLIRTD) are excised as a propeptide.

The protein belongs to the peptidase A25 family. Homotetramer. In terms of processing, autoproteolytically processed. The inactive tetrameric zymogen termed p46 autoprocesses to a smaller form termed p41, which is active only during spore germination.

The enzyme catalyses Endopeptidase action with P4 Glu or Asp, P1 preferably Glu &gt; Asp, P1' hydrophobic and P2' Ala.. Initiates the degradation of small, acid-soluble proteins during spore germination. The protein is Germination protease (gpr) of Bacillus subtilis (strain 168).